A 254-amino-acid polypeptide reads, in one-letter code: PF03932 family protein CutC (254 aa).

It belongs to the CutC family.

The protein resides in the cytoplasm. The protein is PF03932 family protein CutC of Yersinia pestis bv. Antiqua (strain Antiqua).